We begin with the raw amino-acid sequence, 386 residues long: MAP kinase-activated protein kinase 2 (386 aa).

Positions 1-29 (MLSGSPGQTPPAPFPSPPPPAPAQPPPPF) are disordered. Residues 8 to 29 (QTPPAPFPSPPPPAPAQPPPPF) show a composition bias toward pro residues. A Protein kinase domain is found at 50-311 (KVTSQVLGLG…ITEFMNHPWI (262 aa)). ATP contacts are provided by residues 56-64 (LGLGINGKV) and Lys79. 125-127 (ECL) provides a ligand contact to staurosporine. Asp172 acts as the Proton acceptor in catalysis. Thr208 carries the phosphothreonine; by MAPK14 modification. Ser258 is subject to Phosphoserine; by MAPK14. A Phosphoserine; by autocatalysis modification is found at Ser314. The autoinhibitory helix stretch occupies residues 314–350 (STKVPQTPLHTSRVLKEDKERWEDVKEEMTSALATMR). At Thr320 the chain carries Phosphothreonine; by MAPK14. Short sequence motifs (nuclear export signal (NES)) lie at residues 331–354 (DKERWEDVKEEMTSALATMRVDYE) and 342–351 (MTSALATMRV). A Glycyl lysine isopeptide (Lys-Gly) (interchain with G-Cter in SUMO) cross-link involves residue Lys339. The tract at residues 352-376 (DYEQIKIKKIEDASNPLLLKRRKKA) is p38 MAPK-binding site. 2 consecutive short sequence motifs (bipartite nuclear localization signal) follow at residues 357-360 (KIKK) and 371-375 (KRRKK).

It belongs to the protein kinase superfamily. CAMK Ser/Thr protein kinase family. Heterodimer with p38-alpha/MAPK14; this heterodimer forms a stable complex: molecules are positioned 'face to face' so that the ATP-binding sites of both kinases are at the heterodimer interface. Interacts with PHC2. Interacts with HSF1. Post-translationally, sumoylation inhibits the protein kinase activity. Phosphorylated and activated by MAP kinase p38-alpha/MAPK14 at Thr-208; Ser-258 and Thr-320. In terms of tissue distribution, ubiquitously expressed (at protein level).

It localises to the cytoplasm. The protein resides in the nucleus. It catalyses the reaction L-seryl-[protein] + ATP = O-phospho-L-seryl-[protein] + ADP + H(+). It carries out the reaction L-threonyl-[protein] + ATP = O-phospho-L-threonyl-[protein] + ADP + H(+). Activated following phosphorylation by p38-alpha/MAPK14 following various stresses. Inhibited following sumoylation. Specifically inhibited by pyrrolopyridine inhibitors. Functionally, stress-activated serine/threonine-protein kinase involved in cytokine production, endocytosis, reorganization of the cytoskeleton, cell migration, cell cycle control, chromatin remodeling, DNA damage response and transcriptional regulation. Following stress, it is phosphorylated and activated by MAP kinase p38-alpha/MAPK14, leading to phosphorylation of substrates. Phosphorylates serine in the peptide sequence, Hyd-X-R-X(2)-S, where Hyd is a large hydrophobic residue. Phosphorylates ALOX5, CDC25B, CDC25C, CEP131, ELAVL1, HNRNPA0, HSP27/HSPB1, KRT18, KRT20, LIMK1, LSP1, PABPC1, PARN, PDE4A, RCSD1, RPS6KA3, TAB3 and TTP/ZFP36. Phosphorylates HSF1; leading to the interaction with HSP90 proteins and inhibiting HSF1 homotrimerization, DNA-binding and transactivation activities. Mediates phosphorylation of HSP27/HSPB1 in response to stress, leading to dissociation of HSP27/HSPB1 from large small heat-shock protein (sHsps) oligomers and impairment of their chaperone activities and ability to protect against oxidative stress effectively. Involved in inflammatory response by regulating tumor necrosis factor (TNF) and IL6 production post-transcriptionally: acts by phosphorylating AU-rich elements (AREs)-binding proteins ELAVL1, HNRNPA0, PABPC1 and TTP/ZFP36, leading to regulation of the stability and translation of TNF and IL6 mRNAs. Phosphorylation of TTP/ZFP36, a major post-transcriptional regulator of TNF, promotes its binding to 14-3-3 proteins and reduces its ARE mRNA affinity leading to inhibition of dependent degradation of ARE-containing transcripts. Phosphorylates CEP131 in response to cellular stress following ultraviolet irradiation which promotes binding of CEP131 to 14-3-3 proteins and inhibits formation of novel centriolar satellites. Also involved in late G2/M checkpoint following DNA damage through a process of post-transcriptional mRNA stabilization: following DNA damage, relocalizes from nucleus to cytoplasm and phosphorylates HNRNPA0 and PARN, leading to stabilization of GADD45A mRNA. Involved in toll-like receptor signaling pathway (TLR) in dendritic cells: required for acute TLR-induced macropinocytosis by phosphorylating and activating RPS6KA3. This is MAP kinase-activated protein kinase 2 (Mapkapk2) from Mus musculus (Mouse).